We begin with the raw amino-acid sequence, 56 residues long: Large ribosomal subunit protein eL37 (56 aa).

Zn(2+) contacts are provided by Cys-19, Cys-22, Cys-34, and Cys-37. The C4-type zinc-finger motif lies at 19–37 (CRRCGSVSLNIHTKQCTSC).

It belongs to the eukaryotic ribosomal protein eL37 family. Zn(2+) serves as cofactor.

Binds to the 23S rRNA. This chain is Large ribosomal subunit protein eL37, found in Methanococcoides burtonii (strain DSM 6242 / NBRC 107633 / OCM 468 / ACE-M).